We begin with the raw amino-acid sequence, 115 residues long: Large ribosomal subunit protein eL30 (115 aa).

Phosphoserine is present on residues S10 and S16. N6-acetyllysine; alternate is present on K26. K26 is covalently cross-linked (Glycyl lysine isopeptide (Lys-Gly) (interchain with G-Cter in SUMO2); alternate).

The protein belongs to the eukaryotic ribosomal protein eL30 family. Component of the large ribosomal subunit.

The protein resides in the cytoplasm. Functionally, component of the large ribosomal subunit. The ribosome is a large ribonucleoprotein complex responsible for the synthesis of proteins in the cell. This chain is Large ribosomal subunit protein eL30 (RPL30), found in Homo sapiens (Human).